Reading from the N-terminus, the 429-residue chain is MMITLRKLPLAVAVAAGVMSAQALAVDFHGYARSGIGWTGSGGEQQCFKATGAQSKYRLGNECETYAELKLGQELWKEGDKSFYFDTNVAYSVNQEDDWESTSPAFREANIQGKNLIDWLPGSTLWAGKRFYQRHDVHMIDFYYWDISGPGAGLENVDLGFGKLSLAATRNSESGGSYTFSSDDTKKYAAKTANDVFDIRLAGLETNPGGVLELGVDYGRANPQDDYRLEDGASKDGWMWTGEHTQSIWGGFNKFVVQYATDAMTSWNSGHSQGTSIDNNGSMIRVLDHGAMDFNDDWGLMYVAMYQDVDLDSKNGSTWYTVGVRPMYKWTPIMSTQLEIGYDNVKSQRTSENNNQYKITLAQQWQAGNSVWSRPAIRIFATYAKWDENWGYSNTSGLQTKDSSGSGAFTSSRGDDSEVTFGAQMEVWW.

Positions 1–25 (MMITLRKLPLAVAVAAGVMSAQALA) are cleaved as a signal peptide. Residues 397–412 (GLQTKDSSGSGAFTSS) show a composition bias toward polar residues. Residues 397–416 (GLQTKDSSGSGAFTSSRGDD) form a disordered region.

The protein belongs to the porin LamB (TC 1.B.3) family. In terms of assembly, homotrimer formed of three 18-stranded antiparallel beta-barrels, containing three independent channels.

It localises to the cell outer membrane. The enzyme catalyses beta-maltose(in) = beta-maltose(out). Functionally, involved in the transport of maltose and maltodextrins. This chain is Maltoporin 2, found in Klebsiella pneumoniae subsp. pneumoniae (strain ATCC 700721 / MGH 78578).